Here is a 140-residue protein sequence, read N- to C-terminus: MRRPNCIAEILRQHTQIIEESNNYYYLKMKTKDNKSQGPLRSLLCLPKNVNQKTDSAFCSVDGYNVKNKFLCTRSPNQDSLYQFWSMAYKKNIHIIVMLSPIDNLMRHRYWSLEEDEVFECREFRIRLRSSAQWIQFLKK.

The 140-residue stretch at 1–140 (MRRPNCIAEI…SAQWIQFLKK (140 aa)) folds into the Tyrosine-protein phosphatase domain.

This sequence belongs to the protein-tyrosine phosphatase family.

This chain is Truncated tyrosine phosphatase D1 (D1), found in Microplitis demolitor bracovirus (isolate Webb) (MdBV).